A 1079-amino-acid polypeptide reads, in one-letter code: Error-prone DNA polymerase (1079 aa).

The protein belongs to the DNA polymerase type-C family. DnaE2 subfamily.

The protein resides in the cytoplasm. The enzyme catalyses DNA(n) + a 2'-deoxyribonucleoside 5'-triphosphate = DNA(n+1) + diphosphate. DNA polymerase involved in damage-induced mutagenesis and translesion synthesis (TLS). It is not the major replicative DNA polymerase. The chain is Error-prone DNA polymerase from Ralstonia pickettii (strain 12J).